The primary structure comprises 95 residues: Small ribosomal subunit protein bS20c (95 aa).

This sequence belongs to the bacterial ribosomal protein bS20 family.

It is found in the plastid. The protein resides in the chloroplast. Its function is as follows. Binds directly to 16S ribosomal RNA. The sequence is that of Small ribosomal subunit protein bS20c from Pyropia yezoensis (Susabi-nori).